We begin with the raw amino-acid sequence, 308 residues long: Cytochrome b (308 aa).

4 helical membrane passes run 1–21 (FGLL…LLAA), 45–66 (WLIR…YLHI), 81–101 (WNIG…GYVX), and 146–166 (FFAL…VHLT). The heme b site is built by His-51 and His-65. His-150 and His-164 together coordinate heme b. His-169 serves as a coordination point for a ubiquinone. Transmembrane regions (helical) follow at residues 194 to 214 (TKDV…ALFS), 256 to 276 (LGGV…PFLH), and 288 to 308 (LSQI…WVSN).

Belongs to the cytochrome b family. The cytochrome bc1 complex contains 11 subunits: 3 respiratory subunits (MT-CYB, CYC1 and UQCRFS1), 2 core proteins (UQCRC1 and UQCRC2) and 6 low-molecular weight proteins (UQCRH/QCR6, UQCRB/QCR7, UQCRQ/QCR8, UQCR10/QCR9, UQCR11/QCR10 and a cleavage product of UQCRFS1). This cytochrome bc1 complex then forms a dimer. Heme b serves as cofactor.

The protein localises to the mitochondrion inner membrane. Functionally, component of the ubiquinol-cytochrome c reductase complex (complex III or cytochrome b-c1 complex) that is part of the mitochondrial respiratory chain. The b-c1 complex mediates electron transfer from ubiquinol to cytochrome c. Contributes to the generation of a proton gradient across the mitochondrial membrane that is then used for ATP synthesis. The sequence is that of Cytochrome b (MT-CYB) from Pomatostomus ruficeps (Chestnut-crowned babbler).